Here is a 91-residue protein sequence, read N- to C-terminus: Large ribosomal subunit protein bL27 (91 aa).

The tract at residues 1-24 (MAHKKGVGSSRNGRDSNPKMRGVK) is disordered.

This sequence belongs to the bacterial ribosomal protein bL27 family.

This chain is Large ribosomal subunit protein bL27, found in Chloroflexus aggregans (strain MD-66 / DSM 9485).